The chain runs to 230 residues: All-trans retinoic acid-induced differentiation factor (230 aa).

Positions 1–26 (MTANVTVSSMYLFTVLLLLFNVYVNS) are cleaved as a signal peptide. At 27-200 (QDTDAQLCQM…YKCMRQGEFP (174 aa)) the chain is on the extracellular side. One can recognise an EGF-like domain in the interval 152–194 (QKNACNQTVQMPLVCPENSLCSPYGPGFFECSCLNNFHGYKCM). Disulfide bonds link Cys156–Cys172, Cys166–Cys182, and Cys184–Cys193. A helical membrane pass occupies residues 201–221 (LVKVLGILTASTVVVSSVLWF). Over 222-230 (TQRRKVKNT) the chain is Cytoplasmic.

The protein localises to the nucleus envelope. Its subcellular location is the cell membrane. The protein resides in the lysosome membrane. Functionally, involved in osteoblast cell differentiation. May play a role in inducing the cell cycle arrest. This is All-trans retinoic acid-induced differentiation factor (atraid) from Danio rerio (Zebrafish).